The sequence spans 1050 residues: Diacylglycerol kinase iota (1050 aa).

Disordered stretches follow at residues 53–74 (PSSS…GSGA), 92–111 (AAAA…EKEE), and 328–356 (SLKA…ETKG). Over residues 92–105 (AAAAAALEEPAAAG) the composition is skewed to low complexity. Residues 332 to 347 (SNRKKKRTSFKRKASK) show a composition bias toward basic residues. The DAGKc domain occupies 367 to 502 (PLMKPLLVFV…DRWNLHVERN (136 aa)). 2 ANK repeats span residues 943–972 (GHCS…AELL) and 979–1008 (TGET…SLRQ). The PDZ-binding signature appears at 1048–1050 (TAV).

Belongs to the eukaryotic diacylglycerol kinase family. As to quaternary structure, interacts (via PDZ-binding motif) with DLG4; controls the localization of DGKI to the synapse. Interacts (via PDZ-binding motif) with DLG1. Interacts (via PDZ-binding motif) with DLG2. Interacts (via PDZ-binding motif) with DLG3. May interact with RASGRP3; involved in the regulation of RASGRP3 activity. In terms of tissue distribution, in brain, expressed in the hippocampus and cerebellum with stronger expression in the Purkinje cell layer (at protein level). Expressed in kidney.

It is found in the cell projection. The protein localises to the axon. Its subcellular location is the dendrite. It localises to the presynapse. The protein resides in the postsynapse. It is found in the postsynaptic density. The protein localises to the synaptic cell membrane. Its subcellular location is the cytoplasmic vesicle. It localises to the secretory vesicle. The protein resides in the synaptic vesicle membrane. It is found in the cytoplasm. The protein localises to the cytosol. Its subcellular location is the nucleus. The enzyme catalyses a 1,2-diacyl-sn-glycerol + ATP = a 1,2-diacyl-sn-glycero-3-phosphate + ADP + H(+). It catalyses the reaction 1,2-di-(9Z-octadecenoyl)-sn-glycerol + ATP = 1,2-di-(9Z-octadecenoyl)-sn-glycero-3-phosphate + ADP + H(+). The catalysed reaction is 1-octadecanoyl-2-(5Z,8Z,11Z,14Z-eicosatetraenoyl)-sn-glycerol + ATP = 1-octadecanoyl-2-(5Z,8Z,11Z,14Z-eicosatetraenoyl)-sn-glycero-3-phosphate + ADP + H(+). It carries out the reaction 1-octadecanoyl-2-(9Z,12Z)-octadecadienoyl-sn-glycerol + ATP = 1-octadecanoyl-2-(9Z,12Z-octadecadienoyl)-sn-glycero-3-phosphate + ADP + H(+). It participates in lipid metabolism; glycerolipid metabolism. Functionally, diacylglycerol kinase that converts diacylglycerol/DAG into phosphatidic acid/phosphatidate/PA and regulates the respective levels of these two bioactive lipids. Thereby, acts as a central switch between the signaling pathways activated by these second messengers with different cellular targets and opposite effects in numerous biological processes. Has probably no preference for any of the diacylglycerols in terms of the acyl chain composition, especially for the acyl chain at the sn-2 position. By controlling the diacylglycerol/DAG-mediated activation of RASGRP3, negatively regulates the Rap1 signaling pathway. May play a role in presynaptic diacylglycerol/DAG signaling and control neurotransmitter release during metabotropic glutamate receptor-dependent long-term depression. The polypeptide is Diacylglycerol kinase iota (Mus musculus (Mouse)).